The primary structure comprises 150 residues: MAAPSPSTLTASLMAAKKAKGLSFADLEVALGLDEVWIASLFYGQATASPEEAEKLATLLGLDPAITAALQEFPTKGSLDPVIPTDPLIYRFYEIMQVYGMPLKDVIQEKFGDGIMSAIDFTLDVDKVEDPKGDRVKVTMCGKFLPYKKW.

Catalysis depends on residues R91, E94, and S117.

Belongs to the cyanase family.

It carries out the reaction cyanate + hydrogencarbonate + 3 H(+) = NH4(+) + 2 CO2. Its function is as follows. Catalyzes the reaction of cyanate with bicarbonate to produce ammonia and carbon dioxide. The chain is Cyanate hydratase from Synechococcus sp. (strain CC9311).